A 51-amino-acid chain; its full sequence is MARYRCCRSQSRSRCCRRRRRCRRRRRRRCRARRRAMRCCRRRYRLRCRRY.

Belongs to the protamine P1 family. In terms of tissue distribution, testis.

The protein localises to the nucleus. The protein resides in the chromosome. Functionally, protamines substitute for histones in the chromatin of sperm during the haploid phase of spermatogenesis. They compact sperm DNA into a highly condensed, stable and inactive complex. This chain is Sperm protamine P1 (PRM1), found in Macaca mulatta (Rhesus macaque).